The following is a 548-amino-acid chain: Hydroxylamine reductase (548 aa).

[4Fe-4S] cluster is bound by residues C3, C6, C15, and C21. 8 residues coordinate hybrid [4Fe-2O-2S] cluster: H239, E263, C307, C401, C429, C454, E489, and K491. C401 is subject to Cysteine persulfide.

The protein belongs to the HCP family. [4Fe-4S] cluster serves as cofactor. It depends on hybrid [4Fe-2O-2S] cluster as a cofactor.

The protein resides in the cytoplasm. It carries out the reaction A + NH4(+) + H2O = hydroxylamine + AH2 + H(+). Its function is as follows. Catalyzes the reduction of hydroxylamine to form NH(3) and H(2)O. In Desulfosudis oleivorans (strain DSM 6200 / JCM 39069 / Hxd3) (Desulfococcus oleovorans), this protein is Hydroxylamine reductase.